Here is a 3010-residue protein sequence, read N- to C-terminus: Genome polyprotein (3010 aa).

An N-acetylserine; by host modification is found at Ser2. The interaction with STAT1 stretch occupies residues 2–23 (STNPKPQRKTKRNTNRRPQDVK). Positions 2–58 (STNPKPQRKTKRNTNRRPQDVKFPGGGQIVGGVYLLPRRGPRLGVRATRKTSERSQP) are interaction with EIF2AK2/PKR. The interval 2–59 (STNPKPQRKTKRNTNRRPQDVKFPGGGQIVGGVYLLPRRGPRLGVRATRKTSERSQPR) is interaction with DDX3X. Residues 2–75 (STNPKPQRKT…PKARRPEGRT (74 aa)) are disordered. Residues 2-168 (STNPKPQRKT…EDGVNYATGN (167 aa)) are Cytoplasmic-facing. Short sequence motifs (nuclear localization signal) lie at residues 5-13 (PKPQRKTKR) and 38-43 (PRRGPR). Residues 7–16 (PQRKTKRNTN) show a composition bias toward basic residues. Positions 32–47 (GGVYLLPRRGPRLGVR) are enriched in low complexity. Ser53 carries the phosphoserine; by host modification. 2 short sequence motifs (nuclear localization signal) span residues 58-64 (PRGRRQP) and 66-71 (PKARRP). Basic residues predominate over residues 58–68 (PRGRRQPIPKA). The residue at position 99 (Ser99) is a Phosphoserine; by host. An important for endoplasmic reticulum and mitochondrial localization region spans residues 112–152 (PRRRSRNLGKVIDTLTCGFADLMGYIPLVGAPLGGAARALA). Ser116 carries the post-translational modification Phosphoserine; by host PKA. The interval 122 to 173 (VIDTLTCGFADLMGYIPLVGAPLGGAARALAHGVRVLEDGVNYATGNLPGCS) is interaction with APOA2. The interval 164–167 (YATG) is important for lipid droplets localization. A helical membrane pass occupies residues 169-189 (LPGCSFSIFLLALLSCLTIPA). The propeptide at 178-191 (LLALLSCLTIPASA) is ER anchor for the core protein, removed in mature form by host signal peptidase. Residues 190 to 358 (SAYEVRNVSG…AGAHWGVLAG (169 aa)) are Lumenal-facing. 3 N-linked (GlcNAc...) asparagine; by host glycosylation sites follow: Asn196, Asn209, and Asn234. Positions 265–296 (LVGAAALCSAMYVGDLCGSVFLVSQLFTFSPR) are important for fusion. A glycan (N-linked (GlcNAc...) asparagine; by host) is linked at Asn305. Residues 359 to 379 (LAYYSMVGNWAKVLIVMLLFA) traverse the membrane as a helical segment. Over 380–725 (GVDGHTHVTG…WEYILLLFLL (346 aa)) the chain is Lumenal. O-linked (Hex...) threonine; by host glycosylation is found at Thr385 and Thr396. Residues 385–411 (THVTGGRVASSTQSLVSWLSQGPSQKI) are HVR1. O-linked (Hex...) serine; by host glycans are attached at residues Ser401 and Ser404. 4 N-linked (GlcNAc...) (high mannose) asparagine; by host glycosylation sites follow: Asn417, Asn423, Asn430, and Asn448. 4 cysteine pairs are disulfide-bonded: Cys429–Cys552, Cys452–Cys459, Cys486–Cys494, and Cys503–Cys508. O-linked (Hex...) threonine; by host glycosylation is present at Thr473. Residues 474–482 (HDMPESSDQ) are HVR2. The interval 480–493 (SDQRPYCWHYAPRP) is CD81-binding 1. O-linked (Hex...) threonine; by host glycosylation occurs at Thr518. Asn532 carries N-linked (GlcNAc...) (high mannose) asparagine; by host glycosylation. Residues 544-551 (PPQGNWFG) are CD81-binding 2. Asn556 carries an N-linked (GlcNAc...) (high mannose) asparagine; by host glycan. Residues Cys564 and Cys569 are joined by a disulfide bond. A glycan (N-linked (GlcNAc...) (high mannose) asparagine; by host) is linked at Asn576. Intrachain disulfides connect Cys581/Cys585, Cys597/Cys620, and Cys607/Cys644. 2 N-linked (GlcNAc...) (high mannose) asparagine; by host glycosylation sites follow: Asn623 and Asn645. A disulfide bridge links Cys652 with Cys677. Residues 660-671 (SELSPLLLSTTE) form an EIF2AK2/eIF2-alpha phosphorylation homology domain (PePHD) region. Residues 726 to 746 (LADARVCACLWMMLLIAQAEA) form a helical membrane-spanning segment. The Lumenal portion of the chain corresponds to 747-757 (TLENLVVLNAA). A helical transmembrane segment spans residues 758 to 778 (SVAGAHGLLSFLVFFCAAWYI). The Cytoplasmic portion of the chain corresponds to 779 to 781 (KGR). The helical transmembrane segment at 782-803 (LVPGAAYALYGVWPLLLLLLAL) threads the bilayer. Over 804–813 (PPRAYAMDRE) the chain is Lumenal. Residues 814–834 (MAASCGGAVFVGLVLLTLSPY) traverse the membrane as a helical segment. The Cytoplasmic portion of the chain corresponds to 835 to 838 (YKVF). Residues 839-859 (LARLIWWLQYFITRAEAHLQV) form a helical membrane-spanning segment. Topologically, residues 860 to 881 (WVPPLNVRGGRDAIILLTCAVH) are lumenal. The helical transmembrane segment at 882 to 902 (PELIFDITKLLLAILGPLMVL) threads the bilayer. In terms of domain architecture, Peptidase C18 spans 903 to 1026 (QAGITRVPYF…SFGEQGWRLL (124 aa)). Residues 903-1657 (QAGITRVPYF…CMSADLEVVT (755 aa)) lie on the Cytoplasmic side of the membrane. A protease NS2-3 region spans residues 904 to 1206 (AGITRVPYFV…PVESMETTMR (303 aa)). The S-palmitoyl cysteine; by host moiety is linked to residue Cys922. An interaction with host SCPS1 region spans residues 929-949 (AGGHYVQMAFMKLAALTGTYV). Catalysis depends on for protease NS2 activity; shared with dimeric partner residues His952, Glu972, and Cys993. One can recognise a Peptidase S29 domain in the interval 1027-1208 (APITAYSQQT…ESMETTMRSP (182 aa)). Active-site charge relay system; for serine protease NS3 activity residues include His1083 and Asp1107. Positions 1123 and 1125 each coordinate Zn(2+). Ser1165 functions as the Charge relay system; for serine protease NS3 activity in the catalytic mechanism. Cys1171 and His1175 together coordinate Zn(2+). In terms of domain architecture, Helicase ATP-binding spans 1217 to 1369 (PAVPQTFQVA…PNIEEVALSN (153 aa)). ATP is bound at residue 1230-1237 (APTGSGKS). Positions 1237 and 1317 each coordinate Mg(2+). Residues 1316 to 1319 (DECH) carry the DECH box motif. An RNA-binding region spans residues 1486–1497 (QRRGRTGRGRSG). A helical transmembrane segment spans residues 1658–1678 (STWVLVGGVLAALAAYCLTTG). Residues 1679 to 1690 (SVVIVGRIILSG) form an NS3-binding region. The Cytoplasmic portion of the chain corresponds to 1679 to 1805 (SVVIVGRIIL…SITSPLTTQN (127 aa)). Residues 1806–1826 (TLLFNILGGWVAAQLAPPSAA) traverse the membrane as a helical segment. Topologically, residues 1827-1828 (SA) are lumenal. The chain crosses the membrane as a helical span at residues 1829 to 1849 (FVGAGIAGAAVGSIGLGKVLV). The interval 1833 to 1861 (GIAGAAVGSIGLGKVLVDILAGYGAGVAG) is glycine zipper. Position 1850 (Asp1850) is a topological domain, cytoplasmic. A helical membrane pass occupies residues 1851–1871 (ILAGYGAGVAGALVAFKVMSG). The Lumenal portion of the chain corresponds to 1872-1881 (EMPSTEDLVN). The chain crosses the membrane as a helical span at residues 1882 to 1902 (LLPAILSPGALVVGVVCAAIL). Topologically, residues 1903–1972 (RRHVGPGEGA…WINEDCSTPC (70 aa)) are cytoplasmic. Residues Cys1968 and Cys1972 are each lipidated (S-palmitoyl cysteine; by host). Residues 1973–2002 (SGSWLKDVWDWICTVLSDFKTWLQSKLLPR) lie within the membrane without spanning it. The interval 1978–1998 (KDVWDWICTVLSDFKTWLQSK) is membrane-binding. The Cytoplasmic segment spans residues 2003–2989 (LPGLPFLSCQ…YHSLSRARPR (987 aa)). Residues 2005 to 2221 (GLPFLSCQRG…KATCTTHHDS (217 aa)) form an RNA-binding region. The Zn(2+) site is built by Cys2011, Cys2029, Cys2031, and Cys2052. Residues 2120 to 2208 (EFFTEVDGVR…ASSSASQLSA (89 aa)) are FKBP8-binding. The tract at residues 2120–2332 (EFFTEVDGVR…PIPPPRRKRT (213 aa)) is transcriptional activation. Residues 2135 to 2139 (PVCKP) form an interaction with non-structural protein 4A region. The disordered stretch occupies residues 2187 to 2219 (KRRLARGSPPSLASSSASQLSAPSLKATCTTHH). Residues 2189-2441 (RLARGSPPSL…PCAAEESKLP (253 aa)) are interaction with host SKP2. A Phosphoserine; by host; in p56 modification is found at Ser2194. Over residues 2194-2211 (SPPSLASSSASQLSAPSL) the composition is skewed to low complexity. Phosphoserine; by host; in p58 occurs at positions 2197, 2201, 2204, 2207, and 2210. ISDR regions lie at residues 2206–2245 (LSAP…TRVE) and 2210–2249 (SLKA…SENK). Residues 2210-2275 (SLKATCTTHH…REISVPAEIL (66 aa)) form an EIF2AK2/PKR-binding region. Positions 2249-2306 (KVVILDSFDPIRAVEDEREISVPAEILRKPRKFPPALPIWARPDYNPPLLESWKDPDY) are NS4B-binding. The SH3-binding motif lies at 2322 to 2325 (PPIP). A Nuclear localization signal motif is present at residues 2326–2334 (PPRRKRTVV). The interval 2332–2441 (TVVLTESTVS…PCAAEESKLP (110 aa)) is interaction with host IFI27. Lys2350 participates in a covalent cross-link: Glycyl lysine isopeptide (Lys-Gly) (interchain with G-Cter in ubiquitin). Residues 2351–2365 (TFGSSGSSAVDSGTA) are compositionally biased toward polar residues. Residues 2351-2408 (TFGSSGSSAVDSGTATGPPDQASDDGDKGSDVESYSSMPPLEGEPGDPDLSDGSWSTV) are disordered. The V3 stretch occupies residues 2354–2377 (SSGSSAVDSGTATGPPDQASDDGD). Ser2448 and Ser2461 each carry phosphoserine; by host. The RdRp catalytic domain maps to 2633–2751 (PMGFSYDTRC…ICESAGTQED (119 aa)). Residues Asp2639, Asp2737, and Asp2738 each contribute to the Mg(2+) site. Residues 2990–3010 (WFMLCLLLLSVGVGIYLLPNR) form a helical membrane-spanning segment.

It belongs to the hepacivirus polyprotein family. In terms of assembly, homooligomer. Interacts with E1 (via C-terminus). Interacts with the non-structural protein 5A. Interacts (via N-terminus) with host STAT1 (via SH2 domain); this interaction results in decreased STAT1 phosphorylation and ubiquitin-mediated proteasome-dependent STAT1 degradation, leading to decreased IFN-stimulated gene transcription. Interacts with host STAT3; this interaction constitutively activates STAT3. Interacts with host LTBR receptor. Interacts with host TNFRSF1A receptor and possibly induces apoptosis. Interacts with host HNRPK. Interacts with host YWHAE. Interacts with host UBE3A/E6AP. Interacts with host DDX3X. Interacts with host APOA2. Interacts with host RXRA protein. Interacts with host SP110 isoform 3/Sp110b; this interaction sequesters the transcriptional corepressor SP110 away from the nucleus. Interacts with host CREB3 nuclear transcription protein; this interaction triggers cell transformation. Interacts with host ACY3. Interacts with host C1QR1. Interacts with host RBM24; this interaction, which enhances the interaction of the mature core protein with 5'-UTR, may inhibit viral translation and favor replication. Interacts with host EIF2AK2/PKR; this interaction induces the autophosphorylation of EIF2AK2. Part of the viral assembly initiation complex composed of NS2, E1, E2, NS3, NS4A, NS5A and the mature core protein. As to quaternary structure, forms a heterodimer with envelope glycoprotein E2. Interacts with mature core protein. Interacts with protease NS2. The heterodimer E1/E2 interacts with host CLDN1; this interaction plays a role in viral entry into host cell. Interacts with host SPSB2 (via C-terminus). Part of the viral assembly initiation complex composed of NS2, E1, E2, NS3, NS4A, NS5A and the mature core protein. Interacts with host NEURL3; this interaction prevents E1 binding to glycoprotein E2. Forms a heterodimer with envelope glycoprotein E1. Interacts with host CD81 and SCARB1 receptors; these interactions play a role in viral entry into host cell. Interacts with host EIF2AK2/PKR; this interaction inhibits EIF2AK2 and probably allows the virus to evade the innate immune response. Interacts with host CD209/DC-SIGN and CLEC4M/DC-SIGNR. Interact with host SPCS1; this interaction is essential for viral particle assembly. Interacts with protease NS2. The heterodimer E1/E2 interacts with host CLDN1; this interaction plays a role in viral entry into host cell. Part of the viral assembly initiation complex composed of NS2, E1, E2, NS3, NS4A, NS5A and the mature core protein. Interacts with host SLC3A2/4F2hc; the interaction may facilitate viral entry into host cell. Interacts with human PLSCR1. In terms of assembly, homohexamer. Homoheptamer. Interacts with protease NS2. As to quaternary structure, homodimer. Interacts with host SPCS1; this interaction is essential for viral particle assembly. Interacts with envelope glycoprotein E1. Interacts with envelope glycoprotein E2. Interacts with viroporin p7. Interacts with serine protease/helicase NS3. Part of the replication complex composed of NS2, NS3, NS4A, NS4B, NS5A and the RNA-directed RNA polymerase embedded in an ER-derived membranous web. Part of the viral assembly initiation complex composed of NS2, E1, E2, NS3, NS4A, NS5A and the mature core protein. Interacts with protease NS2. Interacts with non-structural protein 4A; this interaction stabilizes the folding of NS3 serine protease. NS3-NS4A interaction is essential for NS3 activation and allows membrane anchorage of the latter. NS3/NS4A complex also prevents phosphorylation of host IRF3, thus preventing the establishment of dsRNA induced antiviral state. Interacts with host MAVS; this interaction leads to the cleavage and inhibition of host MAVS. Interacts with host TICAM1; this interaction leads to the cleavage and inhibition of host TICAM1. Interacts with host TANK-binding kinase/TBK1; this interaction results in the inhibition of the association between TBK1 and IRF3, which leads to the inhibition of IRF3 activation. Interacts with host RBM24. Part of the replication complex composed of NS2, NS3, NS4A, NS4B, NS5A and the RNA-directed RNA polymerase embedded in an ER-derived membranous web. Part of the viral assembly initiation complex composed of NS2, E1, E2, NS3, NS4A, NS5A and the mature core protein. In terms of assembly, interacts with NS3 serine protease; this interaction stabilizes the folding of NS3 serine protease. NS3-NS4A interaction is essential for NS3 activation and allows membrane anchorage of the latter. Interacts with non-structural protein 5A (via N-terminus). Part of the replication complex composed of NS2, NS3, NS4A, NS4B, NS5A and the RNA-directed RNA polymerase embedded in an ER-derived membranous web. Part of the viral assembly initiation complex composed of NS2, E1, E2, NS3, NS4A, NS5A and the mature core protein. As to quaternary structure, homomultimer. Interacts with non-structural protein NS5A. Interacts with host PLA2G4C; this interaction likely initiates the recruitment of replication complexes to lipid droplets. Interacts with host STING; this interaction disrupts the interaction between STING and TBK1 thereby suppressing the interferon signaling. Part of the replication complex composed of NS2, NS3, NS4A, NS4B, NS5A and the RNA-directed RNA polymerase embedded in an ER-derived membranous web. Monomer. Homodimer; dimerization is required for RNA-binding. Interacts with the mature core protein. Interacts (via N-terminus) with non-structural protein 4A. Interacts with non-structural protein 4B. Interacts with RNA-directed RNA polymerase. Part of the viral assembly initiation complex composed of NS2, E1, E2, NS3, NS4A, NS5A and the mature core protein. Part of the replication complex composed of NS2, NS3, NS4A, NS4B, NS5A and the RNA-directed RNA polymerase. Interacts with host GRB2. Interacts with host BIN1. Interacts with host PIK3R1. Interacts with host SRCAP. Interacts with host FKBP8. Interacts with host VAPB. Interacts with host EIF2AK2/PKR; this interaction leads to disruption of EIF2AK2 dimerization by NS5A and probably allows the virus to evade the innate immune response. Interacts (via N-terminus) with host PACSIN2 (via N-terminus); this interaction attenuates protein kinase C alpha-mediated phosphorylation of PACSIN2 by disrupting the interaction between PACSIN2 and PRKCA. Interacts (via N-terminus) with host SRC kinase (via SH2 domain). Interacts with most Src-family kinases. Interacts with host IFI27 and SKP2; promotes the ubiquitin-mediated proteasomal degradation of NS5A. Interacts with host GPS2. Interacts with host TNFRSF21; this interaction allows the modulation by the virus of JNK, p38 MAPK, STAT3, and Akt signaling pathways in a DR6-dependent manner. Interacts (via N-terminus) with host CIDEB (via N-terminus); this interaction seems to regulate the association of HCV particles with APOE. Interacts with host CHKA/Choline Kinase-alpha; CHKA bridges host PI4KA and NS5A and potentiates NS5A-stimulated PI4KA activity, which then facilitates the targeting of the ternary complex to the ER for viral replication. Interacts with host SPSB2 (via C-terminus); this interaction targets NS5A for ubiquitination and degradation. Interacts with host RAB18; this interaction may promote the association of NS5A and other replicase components with lipid droplets. Interacts (via region D2) with host PPIA/CYPA; the interaction stimulates RNA-binding ability of NS5A and is dependent on the peptidyl-prolyl cis-trans isomerase activity of PPIA/CYPA. Interacts with host TRIM14; this interaction induces the degradation of NS5A. In terms of assembly, homooligomer. Interacts with non-structural protein 5A. Interacts with host VAPB. Interacts with host PRK2/PKN2. Interacts with host HNRNPA1 and SEPT6; these interactions facilitate the viral replication. Part of the replication complex composed of NS2, NS3, NS4A, NS4B, NS5A and the RNA-directed RNA polymerase. Requires Zn(2+) as cofactor. Mg(2+) serves as cofactor. Post-translationally, specific enzymatic cleavages in vivo yield mature proteins. The structural proteins, core, E1, E2 and p7 are produced by proteolytic processing by host signal peptidases. The core protein is synthesized as a 23 kDa precursor which is retained in the ER membrane through the hydrophobic signal peptide. Cleavage by the signal peptidase releases the 21 kDa mature core protein. The cleavage of the core protein precursor occurs between aminoacids 176 and 188 but the exact cleavage site is not known. Some degraded forms of the core protein appear as well during the course of infection. The other proteins (p7, NS2, NS3, NS4A, NS4B, NS5A and NS5B) are cleaved by the viral proteases. Autoprocessing between NS2 and NS3 is mediated by the NS2 cysteine protease catalytic domain and regulated by the NS3 N-terminal domain. In terms of processing, phosphorylated by host PKC and PKA. Ubiquitinated; mediated by UBE3A and leading to core protein subsequent proteasomal degradation. Post-translationally, highly N-glycosylated. In terms of processing, palmitoylation is required for NS2/3 autoprocessing and E2 recruitment to membranes. Palmitoylated. This modification may play a role in its polymerization or in protein-protein interactions. Post-translationally, cleaved by host caspases which are probably activated by the viral infection. In terms of processing, ubiquitinated. Ubiquitination, most probably at Lys-2350, mediated by host IFI27 and SKP2 leads to proteasomal degradation, restricting viral infection. Phosphorylated on serines in a basal form termed p56. p58 is a hyperphosphorylated form of p56. p56 and p58 coexist in the cell in roughly equivalent amounts. Hyperphosphorylation is dependent on the presence of NS4A. Host CSNK1A1/CKI-alpha or RPS6KB1 kinases may be responsible for NS5A phosphorylation. Phosphorylated NS5A is involved in viral replication. Post-translationally, tyrosine phosphorylation is essential for the interaction with host SRC. In terms of processing, the N-terminus is phosphorylated by host PRK2/PKN2.

Its subcellular location is the host endoplasmic reticulum membrane. The protein localises to the host mitochondrion membrane. It localises to the virion. It is found in the host cytoplasm. The protein resides in the host nucleus. Its subcellular location is the host lipid droplet. The protein localises to the virion membrane. It localises to the host mitochondrion. It is found in the host cell membrane. The protein resides in the host perinuclear region. It catalyses the reaction Hydrolysis of four peptide bonds in the viral precursor polyprotein, commonly with Asp or Glu in the P6 position, Cys or Thr in P1 and Ser or Ala in P1'.. The enzyme catalyses a ribonucleoside 5'-triphosphate + H2O = a ribonucleoside 5'-diphosphate + phosphate + H(+). The catalysed reaction is ATP + H2O = ADP + phosphate + H(+). It carries out the reaction RNA(n) + a ribonucleoside 5'-triphosphate = RNA(n+1) + diphosphate. With respect to regulation, inhibited by the antiviral drug hexamethylene amiloride. Inhibition by amantadine appears to be genotype-dependent. Also inhibited by long-alkyl-chain iminosugar derivatives. Activity is up-regulated by PRK2/PKN2-mediated phosphorylation. Functionally, packages viral RNA to form a viral nucleocapsid, and promotes virion budding. Participates in the viral particle production as a result of its interaction with the non-structural protein 5A. Binds RNA and may function as a RNA chaperone to induce the RNA structural rearrangements taking place during virus replication. Modulates viral translation initiation by interacting with viral IRES and 40S ribosomal subunit. Affects various cell signaling pathways, host immunity and lipid metabolism. Prevents the establishment of cellular antiviral state by blocking the interferon-alpha/beta (IFN-alpha/beta) and IFN-gamma signaling pathways and by blocking the formation of phosphorylated STAT1 and promoting ubiquitin-mediated proteasome-dependent degradation of STAT1. Activates STAT3 leading to cellular transformation. Regulates the activity of cellular genes, including c-myc and c-fos. May repress the promoter of p53, and sequester CREB3 and SP110 isoform 3/Sp110b in the cytoplasm. Represses cell cycle negative regulating factor CDKN1A, thereby interrupting an important check point of normal cell cycle regulation. Targets transcription factors involved in the regulation of inflammatory responses and in the immune response: suppresses NF-kappa-B activation, and activates AP-1. Binds to dendritic cells (DCs) via C1QR1, resulting in down-regulation of T-lymphocytes proliferation. Alters lipid metabolism by interacting with hepatocellular proteins involved in lipid accumulation and storage. Induces up-regulation of FAS promoter activity, and thereby contributes to the increased triglyceride accumulation in hepatocytes (steatosis). Forms a heterodimer with envelope glycoprotein E2, which mediates virus attachment to the host cell, virion internalization through clathrin-dependent endocytosis and fusion with host membrane. Fusion with the host cell is most likely mediated by both E1 and E2, through conformational rearrangements of the heterodimer required for fusion rather than a classical class II fusion mechanism. E1/E2 heterodimer binds host apolipoproteins such as APOB and APOE thereby forming a lipo-viro-particle (LVP). APOE associated to the LVP allows the initial virus attachment to cell surface receptors such as the heparan sulfate proteoglycans (HSPGs), syndecan-1 (SDC1), syndecan-1 (SDC2), the low-density lipoprotein receptor (LDLR) and scavenger receptor class B type I (SCARB1). The cholesterol transfer activity of SCARB1 allows E2 exposure and binding of E2 to SCARB1 and the tetraspanin CD81. E1/E2 heterodimer binding on CD81 activates the epithelial growth factor receptor (EGFR) signaling pathway. Diffusion of the complex E1-E2-EGFR-SCARB1-CD81 to the cell lateral membrane allows further interaction with Claudin 1 (CLDN1) and occludin (OCLN) to finally trigger HCV entry. Its function is as follows. Forms a heterodimer with envelope glycoprotein E1, which mediates virus attachment to the host cell, virion internalization through clathrin-dependent endocytosis and fusion with host membrane. Fusion with the host cell is most likely mediated by both E1 and E2, through conformational rearrangements of the heterodimer required for fusion rather than a classical class II fusion mechanism. The interaction between envelope glycoprotein E2 and host apolipoprotein E/APOE allows the proper assembly, maturation and infectivity of the viral particles. This interaction is probably promoted via the up-regulation of cellular autophagy by the virus. E1/E2 heterodimer binds host apolipoproteins such as APOB and APOE thereby forming a lipo-viro-particle (LVP). APOE associated to the LVP allows the initial virus attachment to cell surface receptors such as the heparan sulfate proteoglycans (HSPGs), syndecan-1 (SDC1), syndecan-1 (SDC2), the low-density lipoprotein receptor (LDLR) and scavenger receptor class B type I (SCARB1). The cholesterol transfer activity of SCARB1 allows E2 exposure and binding of E2 to SCARB1 and the tetraspanin CD81. E1/E2 heterodimer binding on CD81 activates the epithelial growth factor receptor (EGFR) signaling pathway. Diffusion of the complex E1-E2-EGFR-SCARB1-CD81 to the cell lateral membrane allows further interaction with Claudin 1 (CLDN1) and occludin (OCLN) to finally trigger HCV entry. Inhibits host EIF2AK2/PKR activation, preventing the establishment of an antiviral state. Viral ligand for CD209/DC-SIGN and CLEC4M/DC-SIGNR, which are respectively found on dendritic cells (DCs), and on liver sinusoidal endothelial cells and macrophage-like cells of lymph node sinuses. These interactions allow the capture of circulating HCV particles by these cells and subsequent facilitated transmission to permissive cells such as hepatocytes and lymphocyte subpopulations. The interaction between E2 and host amino acid transporter complex formed by SLC3A2 and SLC7A5/LAT1 may facilitate viral entry into host cell. In terms of biological role, ion channel protein that acts as a viroporin and plays an essential role in the assembly, envelopment and secretion of viral particles. Regulates the host cell secretory pathway, which induces the intracellular retention of viral glycoproteins and favors assembly of viral particles. Creates a pore in acidic organelles and releases Ca(2+) and H(+) in the cytoplasm of infected cells, leading to a productive viral infection. High levels of cytoplasmic Ca(2+) may trigger membrane trafficking and transport of viral ER-associated proteins to viroplasms, sites of viral genome replication. This ionic imbalance induces the assembly of the inflammasome complex, which triggers the maturation of pro-IL-1beta into IL-1beta through the action of caspase-1. Targets also host mitochondria and induces mitochondrial depolarization. In addition of its role as a viroporin, acts as a lipid raft adhesion factor. Functionally, cysteine protease required for the proteolytic auto-cleavage between the non-structural proteins NS2 and NS3. The N-terminus of NS3 is required for the function of NS2 protease (active region NS2-3). Promotes the initiation of viral particle assembly by mediating the interaction between structural and non-structural proteins. Displays three enzymatic activities: serine protease with a chymotrypsin-like fold, NTPase and RNA helicase. NS3 serine protease, in association with NS4A, is responsible for the cleavages of NS3-NS4A, NS4A-NS4B, NS4B-NS5A and NS5A-NS5B. The NS3/NS4A complex prevents phosphorylation of host IRF3, thus preventing the establishment of dsRNA induced antiviral state. The NS3/NS4A complex induces host amino acid transporter component SLC3A2, thus contributing to HCV propagation. NS3 RNA helicase binds to RNA and unwinds both dsDNA and dsRNA in the 3' to 5' direction, and likely resolves RNA complicated stable secondary structures in the template strand. Binds a single ATP and catalyzes the unzipping of a single base pair of dsRNA. Inhibits host antiviral proteins TBK1 and IRF3 thereby preventing the establishment of an antiviral state. Cleaves host MAVS/CARDIF thereby preventing the establishment of an antiviral state. Cleaves host TICAM1/TRIF, thereby disrupting TLR3 signaling and preventing the establishment of an antiviral state. Its function is as follows. Peptide cofactor which forms a non-covalent complex with the N-terminal of NS3 serine protease. The NS3/NS4A complex prevents phosphorylation of host IRF3, thus preventing the establishment of dsRNA induced antiviral state. The NS3/NS4A complex induces host amino acid transporter component SLC3A2, thus contributing to HCV propagation. In terms of biological role, induces a specific membrane alteration that serves as a scaffold for the virus replication complex. This membrane alteration gives rise to the so-called ER-derived membranous web that contains the replication complex. NS4B self-interaction contributes to its function in membranous web formation. Promotes host TRIF protein degradation in a CASP8-dependent manner thereby inhibiting host TLR3-mediated interferon signaling. Disrupts the interaction between STING and TBK1 contributing to the inhibition of interferon signaling. Functionally, phosphorylated protein that is indispensable for viral replication and assembly. Both hypo- and hyperphosphorylated states are required for the viral life cycle. The hyperphosphorylated form of NS5A is an inhibitor of viral replication. Involved in RNA-binding and especially in binding to the viral genome. Zinc is essential for RNA-binding. Participates in the viral particle production as a result of its interaction with the mature viral core protein. Its interaction with host VAPB may target the viral replication complex to vesicles. Down-regulates viral IRES translation initiation. Mediates interferon resistance, presumably by interacting with and inhibiting host EIF2AK2/PKR. Prevents BIN1-induced apoptosis. Acts as a transcriptional activator of some host genes important for viral replication when localized in the nucleus. Via the interaction with host PACSIN2, modulates lipid droplet formation in order to promote virion assembly. Modulates TNFRSF21/DR6 signaling pathway for viral propagation. RNA-dependent RNA polymerase that performs primer-template recognition and RNA synthesis during viral replication. Initiates RNA transcription/replication at a flavin adenine dinucleotide (FAD), resulting in a 5'- FAD cap on viral RNAs. In this way, recognition of viral 5' RNA by host pattern recognition receptors can be bypassed, thereby evading activation of antiviral pathways. The sequence is that of Genome polyprotein from Hepatitis C virus genotype 1b (isolate Japanese) (HCV).